The primary structure comprises 130 residues: B1 protein (130 aa).

Positions 1 to 12 (LTSLILLVAVQA) are cleaved as a signal peptide. Disulfide bonds link cysteine 28/cysteine 59 and cysteine 99/cysteine 116.

The protein belongs to the PBP/GOBP family. N-glycosylated. In terms of tissue distribution, tubular accessory sex gland.

It is found in the secreted. May be a carrier protein for lipids. This is B1 protein from Tenebrio molitor (Yellow mealworm beetle).